The sequence spans 378 residues: Lipoyl synthase, mitochondrial (378 aa).

7 residues coordinate [4Fe-4S] cluster: Cys109, Cys114, Cys120, Cys140, Cys144, Cys147, and Ser356. In terms of domain architecture, Radical SAM core spans 125 to 345 (ETGTATATIM…QTLGMEMGFR (221 aa)).

This sequence belongs to the radical SAM superfamily. Lipoyl synthase family. Requires [4Fe-4S] cluster as cofactor.

It localises to the mitochondrion. It catalyses the reaction [[Fe-S] cluster scaffold protein carrying a second [4Fe-4S](2+) cluster] + N(6)-octanoyl-L-lysyl-[protein] + 2 oxidized [2Fe-2S]-[ferredoxin] + 2 S-adenosyl-L-methionine + 4 H(+) = [[Fe-S] cluster scaffold protein] + N(6)-[(R)-dihydrolipoyl]-L-lysyl-[protein] + 4 Fe(3+) + 2 hydrogen sulfide + 2 5'-deoxyadenosine + 2 L-methionine + 2 reduced [2Fe-2S]-[ferredoxin]. Its pathway is protein modification; protein lipoylation via endogenous pathway; protein N(6)-(lipoyl)lysine from octanoyl-[acyl-carrier-protein]: step 2/2. Its function is as follows. Catalyzes the radical-mediated insertion of two sulfur atoms into the C-6 and C-8 positions of the octanoyl moiety bound to the lipoyl domains of lipoate-dependent enzymes, thereby converting the octanoylated domains into lipoylated derivatives. This Medicago truncatula (Barrel medic) protein is Lipoyl synthase, mitochondrial.